The sequence spans 210 residues: Na(+)-translocating NADH-quinone reductase subunit D (210 aa).

6 helical membrane passes run 11 to 31, 42 to 62, 70 to 90, 103 to 123, 131 to 151, and 178 to 198; these read ILAP…VCSA, FVMT…VSLI, VRII…DQIL, VFVG…AFAM, FIDG…VGFF, and NGLM…IWAI.

Belongs to the NqrDE/RnfAE family. Composed of six subunits; NqrA, NqrB, NqrC, NqrD, NqrE and NqrF.

Its subcellular location is the cell inner membrane. It catalyses the reaction a ubiquinone + n Na(+)(in) + NADH + H(+) = a ubiquinol + n Na(+)(out) + NAD(+). Functionally, NQR complex catalyzes the reduction of ubiquinone-1 to ubiquinol by two successive reactions, coupled with the transport of Na(+) ions from the cytoplasm to the periplasm. NqrA to NqrE are probably involved in the second step, the conversion of ubisemiquinone to ubiquinol. In Vibrio anguillarum (Listonella anguillarum), this protein is Na(+)-translocating NADH-quinone reductase subunit D.